The following is a 440-amino-acid chain: Chromosome partition protein MukF (440 aa).

Residues L208–I236 form a leucine-zipper region.

It belongs to the MukF family. As to quaternary structure, interacts, and probably forms a ternary complex, with MukE and MukB via its C-terminal region. The complex formation is stimulated by calcium or magnesium. It is required for an interaction between MukE and MukB.

The protein resides in the cytoplasm. It is found in the nucleoid. Its function is as follows. Involved in chromosome condensation, segregation and cell cycle progression. May participate in facilitating chromosome segregation by condensation DNA from both sides of a centrally located replisome during cell division. Not required for mini-F plasmid partitioning. Probably acts via its interaction with MukB and MukE. Overexpression results in anucleate cells. It has a calcium binding activity. This Salmonella agona (strain SL483) protein is Chromosome partition protein MukF.